The following is a 185-amino-acid chain: Meiotically up-regulated gene 5 protein (185 aa).

It is found in the cytoplasm. In terms of biological role, required for correct meiotic chromosome segregation. In Schizosaccharomyces pombe (strain 972 / ATCC 24843) (Fission yeast), this protein is Meiotically up-regulated gene 5 protein (mug5).